Here is a 498-residue protein sequence, read N- to C-terminus: Cytochrome P450 71D15 (498 aa).

Residues 3-23 form a helical; Signal-anchor for type II membrane protein membrane-spanning segment; the sequence is LLQLWSALIILVVTYTISLLI. Residue C437 coordinates heme.

This sequence belongs to the cytochrome P450 family. The cofactor is heme.

The protein resides in the endoplasmic reticulum membrane. The enzyme catalyses (4S)-limonene + reduced [NADPH--hemoprotein reductase] + O2 = (1S,6R)-isopiperitenol + oxidized [NADPH--hemoprotein reductase] + H2O + H(+). Its function is as follows. Hydroxylates (-)-(4S)-limonene to (-)-trans-isopiperitenol, a precursor of (-)-menthol, responsible for the cooling sensation of peppermint. Fluorinated substrate analogs are hydroxylated with the same regio- and stereochemistry. The chain is Cytochrome P450 71D15 (CYP71D15) from Mentha piperita (Peppermint).